Consider the following 346-residue polypeptide: Cyclin-dependent kinase 20 (346 aa).

The region spanning 4–288 is the Protein kinase domain; sequence YCILGRIGEG…ASQALLHQYF (285 aa). ATP is bound by residues 10 to 18 and Lys33; that span reads IGEGAHGIV. Asp127 serves as the catalytic Proton acceptor. The segment at 298 to 324 is disordered; sequence SELPIPQRPGGPTPKAHPGPPHVHDFH. The segment covering 303–318 has biased composition (pro residues); the sequence is PQRPGGPTPKAHPGPP.

Belongs to the protein kinase superfamily. CMGC Ser/Thr protein kinase family. CDC2/CDKX subfamily. In terms of assembly, monomer. Interacts with TBC1D32 and MAK.

Its subcellular location is the nucleus. The protein localises to the cytoplasm. The protein resides in the cell projection. It is found in the cilium. It carries out the reaction L-seryl-[protein] + ATP = O-phospho-L-seryl-[protein] + ADP + H(+). The catalysed reaction is L-threonyl-[protein] + ATP = O-phospho-L-threonyl-[protein] + ADP + H(+). Required for high-level Shh responses in the developing neural tube. Together with TBC1D32, controls the structure of the primary cilium by coordinating assembly of the ciliary membrane and axoneme, allowing GLI2 to be properly activated in response to SHH signaling. Involved in cell growth. Activates CDK2, a kinase involved in the control of the cell cycle, by phosphorylating residue 'Thr-160'. The polypeptide is Cyclin-dependent kinase 20 (Cdk20) (Rattus norvegicus (Rat)).